Consider the following 250-residue polypeptide: MRPILIAGNWKMHKTQAEAREFLRELGLALRSSPSGSASQRQIILCVPFTDLAVVAEQSRGSDIAVGAQNLHWEDQGAFTGEISGPMLAELGVRYVIVGHSERRQYFGETDETVNRRLAAAQRHGLTPILCVGESQQQREQGLTESWIVGQLDRALQGIDLENLVIAYEPIWAIGTGQTCAAQEANRVIGLIRQHLGNAQLPILYGGSVKAGNIDELMAQPEIDGVLVGGASLDPQEFARIVNFQALAPA.

Residue 9–11 (NWK) participates in substrate binding. H100 serves as the catalytic Electrophile. E169 functions as the Proton acceptor in the catalytic mechanism. Residues G175, S208, and 229-230 (GG) contribute to the substrate site.

It belongs to the triosephosphate isomerase family. In terms of assembly, homodimer.

The protein localises to the cytoplasm. It carries out the reaction D-glyceraldehyde 3-phosphate = dihydroxyacetone phosphate. Its pathway is carbohydrate biosynthesis; gluconeogenesis. The protein operates within carbohydrate degradation; glycolysis; D-glyceraldehyde 3-phosphate from glycerone phosphate: step 1/1. Involved in the gluconeogenesis. Catalyzes stereospecifically the conversion of dihydroxyacetone phosphate (DHAP) to D-glyceraldehyde-3-phosphate (G3P). This Synechococcus sp. (strain JA-2-3B'a(2-13)) (Cyanobacteria bacterium Yellowstone B-Prime) protein is Triosephosphate isomerase.